The chain runs to 425 residues: Serine--tRNA ligase (425 aa).

230–232 (TAE) serves as a coordination point for L-serine. 261–263 (RSE) is an ATP binding site. Glutamate 284 provides a ligand contact to L-serine. 348 to 351 (EISS) is an ATP binding site. Serine 384 is an L-serine binding site.

Belongs to the class-II aminoacyl-tRNA synthetase family. Type-1 seryl-tRNA synthetase subfamily. Homodimer. The tRNA molecule binds across the dimer.

The protein localises to the cytoplasm. The catalysed reaction is tRNA(Ser) + L-serine + ATP = L-seryl-tRNA(Ser) + AMP + diphosphate + H(+). It carries out the reaction tRNA(Sec) + L-serine + ATP = L-seryl-tRNA(Sec) + AMP + diphosphate + H(+). Its pathway is aminoacyl-tRNA biosynthesis; selenocysteinyl-tRNA(Sec) biosynthesis; L-seryl-tRNA(Sec) from L-serine and tRNA(Sec): step 1/1. Catalyzes the attachment of serine to tRNA(Ser). Is also able to aminoacylate tRNA(Sec) with serine, to form the misacylated tRNA L-seryl-tRNA(Sec), which will be further converted into selenocysteinyl-tRNA(Sec). The protein is Serine--tRNA ligase of Streptococcus sanguinis (strain SK36).